A 301-amino-acid polypeptide reads, in one-letter code: Heterogeneous nuclear ribonucleoprotein D-like (301 aa).

RRM domains are found at residues 29–111 and 114–193; these read GKMF…KGKE and KKVF…QPKE. N6-methyllysine is present on lysine 42. Lysine 90 participates in a covalent cross-link: Glycyl lysine isopeptide (Lys-Gly) (interchain with G-Cter in SUMO2). An N6-acetyllysine modification is found at lysine 97. A Phosphoserine modification is found at serine 122. Disordered stretches follow at residues 194 to 229 and 279 to 301; these read VYRQQQQQQKGGRGAAAGGRGGARGRGRGQGQNWNQ and GQQSTYGKASRGGGNHQNNYQPY. Residues 204-223 show a composition bias toward gly residues; that stretch reads GGRGAAAGGRGGARGRGRGQ. Residues 223 to 301 are necessary for interaction with TNPO1; the sequence is QGQNWNQGFN…GNHQNNYQPY (79 aa). Dimethylated arginine; alternate is present on arginine 289. Arginine 289 is modified (omega-N-methylarginine; alternate).

Interacts with TNPO1. Interacts with ZNF148. Dimethylation of Arg-289 is probably of the asymmetric type. In terms of tissue distribution, expressed in skeletal muscle, myoblast, myotube, heart, brain, liver, kidney, heart, lung, stomach, small intestine, large intestine, spleen, and testis (at protein level). Expressed in brain, skeletal muscle, heart, lung, liver, stomach, small intestine, large intestine, kidney, spleen and testis.

The protein resides in the nucleus. The protein localises to the cytoplasm. Acts as a transcriptional regulator. Promotes transcription repression. Promotes transcription activation in differentiated myotubes. Binds to double- and single-stranded DNA sequences. Binds to the transcription suppressor CATR sequence of the COX5B promoter. Binds with high affinity to RNA molecules that contain AU-rich elements (AREs) found within the 3'-UTR of many proto-oncogenes and cytokine mRNAs. Binds both to nuclear and cytoplasmic poly(A) mRNAs. Binds to poly(G) and poly(A), but not to poly(U) or poly(C) RNA homopolymers. Binds to the 5'-ACUAGC-3' RNA consensus sequence. The protein is Heterogeneous nuclear ribonucleoprotein D-like (Hnrnpdl) of Mus musculus (Mouse).